Here is a 94-residue protein sequence, read N- to C-terminus: Protein RESPONSE TO LOW SULFUR 1 (94 aa).

Positions Val8–Glu35 form a coiled coil.

The polypeptide is Protein RESPONSE TO LOW SULFUR 1 (Arabidopsis thaliana (Mouse-ear cress)).